Reading from the N-terminus, the 244-residue chain is Phosphoadenosine 5'-phosphosulfate reductase (244 aa).

The Nucleophile; cysteine thiosulfonate intermediate role is filled by cysteine 239.

It belongs to the PAPS reductase family. CysH subfamily.

It is found in the cytoplasm. It carries out the reaction [thioredoxin]-disulfide + sulfite + adenosine 3',5'-bisphosphate + 2 H(+) = [thioredoxin]-dithiol + 3'-phosphoadenylyl sulfate. Its pathway is sulfur metabolism; hydrogen sulfide biosynthesis; sulfite from sulfate: step 3/3. Catalyzes the formation of sulfite from phosphoadenosine 5'-phosphosulfate (PAPS) using thioredoxin as an electron donor. This chain is Phosphoadenosine 5'-phosphosulfate reductase, found in Serratia proteamaculans (strain 568).